The chain runs to 517 residues: ATP synthase subunit alpha (517 aa).

174 to 181 (GDRQTGKT) serves as a coordination point for ATP.

It belongs to the ATPase alpha/beta chains family. As to quaternary structure, F-type ATPases have 2 components, CF(1) - the catalytic core - and CF(0) - the membrane proton channel. CF(1) has five subunits: alpha(3), beta(3), gamma(1), delta(1), epsilon(1). CF(0) has three main subunits: a(1), b(2) and c(9-12). The alpha and beta chains form an alternating ring which encloses part of the gamma chain. CF(1) is attached to CF(0) by a central stalk formed by the gamma and epsilon chains, while a peripheral stalk is formed by the delta and b chains.

The protein resides in the cell inner membrane. The enzyme catalyses ATP + H2O + 4 H(+)(in) = ADP + phosphate + 5 H(+)(out). Its function is as follows. Produces ATP from ADP in the presence of a proton gradient across the membrane. The alpha chain is a regulatory subunit. This chain is ATP synthase subunit alpha, found in Delftia acidovorans (strain DSM 14801 / SPH-1).